Consider the following 418-residue polypeptide: Tol-Pal system protein TolB (418 aa).

The signal sequence occupies residues 1 to 21 (MKLFVQLVLFISLFIPYSTKA).

The protein belongs to the TolB family. The Tol-Pal system is composed of five core proteins: the inner membrane proteins TolA, TolQ and TolR, the periplasmic protein TolB and the outer membrane protein Pal. They form a network linking the inner and outer membranes and the peptidoglycan layer.

The protein localises to the periplasm. In terms of biological role, part of the Tol-Pal system, which plays a role in outer membrane invagination during cell division and is important for maintaining outer membrane integrity. The chain is Tol-Pal system protein TolB from Wolbachia pipientis subsp. Culex pipiens (strain wPip).